The primary structure comprises 221 residues: Beta-phosphoglucomutase (221 aa).

The active-site Nucleophile is the Asp-8. 2 residues coordinate Mg(2+): Asp-8 and Asp-10. Asp-8 is modified (4-aspartylphosphate). Asp-10 (proton donor/acceptor) is an active-site residue. Positions 10, 46, 47, 49, 116, 117, and 118 each coordinate beta-D-glucose 6-phosphate. Mg(2+) is bound at residue Asp-170.

The protein belongs to the HAD-like hydrolase superfamily. CbbY/CbbZ/Gph/YieH family. Monomer. Requires Mg(2+) as cofactor. Autophosphorylated.

Its subcellular location is the cytoplasm. The catalysed reaction is beta-D-glucose 1-phosphate = beta-D-glucose 6-phosphate. With respect to regulation, activated by phosphorylation. Competitively inhibited by alpha-D-galactose-1-phosphate. Catalyzes the interconversion of D-glucose 1-phosphate (G1P) and D-glucose 6-phosphate (G6P), forming beta-D-glucose 1,6-(bis)phosphate (beta-G16P) as an intermediate. The beta-phosphoglucomutase (Beta-PGM) acts on the beta-C(1) anomer of G1P. Glucose or lactose are used in preference to maltose, which is only utilized after glucose or lactose has been exhausted. It plays a key role in the regulation of the flow of carbohydrate intermediates in glycolysis and the formation of the sugar nucleotide UDP-glucose. The protein is Beta-phosphoglucomutase of Lactococcus lactis subsp. lactis (strain IL1403) (Streptococcus lactis).